Reading from the N-terminus, the 515-residue chain is Bifunctional purine biosynthesis protein PurH (515 aa).

The region spanning 1 to 145 (MTKRALISVS…KNHASVTVVV (145 aa)) is the MGS-like domain.

The protein belongs to the PurH family.

It catalyses the reaction (6R)-10-formyltetrahydrofolate + 5-amino-1-(5-phospho-beta-D-ribosyl)imidazole-4-carboxamide = 5-formamido-1-(5-phospho-D-ribosyl)imidazole-4-carboxamide + (6S)-5,6,7,8-tetrahydrofolate. The enzyme catalyses IMP + H2O = 5-formamido-1-(5-phospho-D-ribosyl)imidazole-4-carboxamide. Its pathway is purine metabolism; IMP biosynthesis via de novo pathway; 5-formamido-1-(5-phospho-D-ribosyl)imidazole-4-carboxamide from 5-amino-1-(5-phospho-D-ribosyl)imidazole-4-carboxamide (10-formyl THF route): step 1/1. It participates in purine metabolism; IMP biosynthesis via de novo pathway; IMP from 5-formamido-1-(5-phospho-D-ribosyl)imidazole-4-carboxamide: step 1/1. In Streptococcus agalactiae serotype Ia (strain ATCC 27591 / A909 / CDC SS700), this protein is Bifunctional purine biosynthesis protein PurH.